Reading from the N-terminus, the 385-residue chain is Galactokinase (385 aa).

Residue 34-37 (EHTD) coordinates substrate. 124-130 (SSGLSSS) is a binding site for ATP. Mg(2+) is bound by residues S130 and E162. D174 acts as the Proton acceptor in catalysis. Residue Y223 coordinates substrate.

It belongs to the GHMP kinase family. GalK subfamily.

Its subcellular location is the cytoplasm. It catalyses the reaction alpha-D-galactose + ATP = alpha-D-galactose 1-phosphate + ADP + H(+). Its pathway is carbohydrate metabolism; galactose metabolism. Functionally, catalyzes the transfer of the gamma-phosphate of ATP to D-galactose to form alpha-D-galactose-1-phosphate (Gal-1-P). This Actinobacillus succinogenes (strain ATCC 55618 / DSM 22257 / CCUG 43843 / 130Z) protein is Galactokinase.